Reading from the N-terminus, the 37-residue chain is Large ribosomal subunit protein bL36 (37 aa).

Belongs to the bacterial ribosomal protein bL36 family.

The protein is Large ribosomal subunit protein bL36 of Natranaerobius thermophilus (strain ATCC BAA-1301 / DSM 18059 / JW/NM-WN-LF).